Reading from the N-terminus, the 234-residue chain is (5-formylfuran-3-yl)methyl phosphate synthase (234 aa).

Lys27 (schiff-base intermediate with substrate) is an active-site residue. The Proton acceptor role is filled by Lys85.

Belongs to the MfnB family.

It catalyses the reaction 2 D-glyceraldehyde 3-phosphate = 4-(hydroxymethyl)-2-furancarboxaldehyde phosphate + phosphate + 2 H2O. Its pathway is cofactor biosynthesis; methanofuran biosynthesis. Functionally, catalyzes the formation of 4-(hydroxymethyl)-2-furancarboxaldehyde phosphate (4-HFC-P) from two molecules of glyceraldehyde-3-P (GA-3-P). This Methanosarcina mazei (strain ATCC BAA-159 / DSM 3647 / Goe1 / Go1 / JCM 11833 / OCM 88) (Methanosarcina frisia) protein is (5-formylfuran-3-yl)methyl phosphate synthase.